The chain runs to 90 residues: UPF0297 protein Swol_0469 (90 aa).

Belongs to the UPF0297 family.

The chain is UPF0297 protein Swol_0469 from Syntrophomonas wolfei subsp. wolfei (strain DSM 2245B / Goettingen).